A 338-amino-acid chain; its full sequence is Fructose-1,6-bisphosphatase class 1 (338 aa).

Positions 90, 112, 114, and 115 each coordinate Mg(2+). Substrate contacts are provided by residues 115 to 118, Asn-207, and Lys-273; that span reads DGSS. Glu-279 provides a ligand contact to Mg(2+).

It belongs to the FBPase class 1 family. As to quaternary structure, homotetramer. Mg(2+) serves as cofactor.

Its subcellular location is the cytoplasm. It carries out the reaction beta-D-fructose 1,6-bisphosphate + H2O = beta-D-fructose 6-phosphate + phosphate. Its pathway is carbohydrate biosynthesis; gluconeogenesis. The protein is Fructose-1,6-bisphosphatase class 1 of Stenotrophomonas maltophilia (strain R551-3).